We begin with the raw amino-acid sequence, 3563 residues long: D-lysergyl-peptide-synthetase subunit 1 (3563 aa).

Residues 307–706 (SCSPRPNPQA…LGRKDDQVKI (400 aa)) are adenylation (A) domain 1. In terms of domain architecture, Carrier 1 spans 844–921 (EPKSDREKLL…EIVIVSTSAT (78 aa)). Ser881 carries the O-(pantetheine 4'-phosphoryl)serine modification. Residues 963–1354 (EDIYPCTHLQ…EHILTEIHSN (392 aa)) are condensation (C) domain 1. Residues 1397-1804 (QEKCQAQPDA…RRKDAQVKIR (408 aa)) form an adenylation (A) domain 2 region. Residues 1944 to 2020 (PPSNATEHEI…KLALARGVTQ (77 aa)) form the Carrier 2 domain. The residue at position 1981 (Ser1981) is an O-(pantetheine 4'-phosphoryl)serine. Positions 2067–2486 (ERIYPCSPIQ…ALPVLDEDQM (420 aa)) are condensation (C) domain 2. The adenylation (A) domain 3 stretch occupies residues 2511-2909 (QCIRCPDSPS…GRNDDQVKVR (399 aa)). A Carrier 3 domain is found at 3025 to 3104 (PPRTALEAEL…RFGSYRRAGA (80 aa)). O-(pantetheine 4'-phosphoryl)serine is present on Ser3064. Residues 3166–3451 (LYFSKPMASE…VAKSTTWSSD (286 aa)) are cyclization (Cyc) domain.

It belongs to the NRP synthetase family.

Its pathway is alkaloid biosynthesis; ergot alkaloid biosynthesis. Functionally, D-lysergyl-peptide-synthetase subunit 1; part of the gene cluster that mediates the biosynthesis of fungal ergot alkaloid. DmaW catalyzes the first step of ergot alkaloid biosynthesis by condensing dimethylallyl diphosphate (DMAP) and tryptophan to form 4-dimethylallyl-L-tryptophan. The second step is catalyzed by the methyltransferase easF that methylates 4-dimethylallyl-L-tryptophan in the presence of S-adenosyl-L-methionine, resulting in the formation of 4-dimethylallyl-L-abrine. The catalase easC and the FAD-dependent oxidoreductase easE then transform 4-dimethylallyl-L-abrine to chanoclavine-I which is further oxidized by easD in the presence of NAD(+), resulting in the formation of chanoclavine-I aldehyde. Agroclavine dehydrogenase easG then mediates the conversion of chanoclavine-I aldehyde to agroclavine via a non-enzymatic adduct reaction: the substrate is an iminium intermediate that is formed spontaneously from chanoclavine-I aldehyde in the presence of glutathione. The presence of easA is not required to complete this reaction. Further conversion of agroclavine to paspalic acid is a two-step process involving oxidation of agroclavine to elymoclavine and of elymoclavine to paspalic acid, the second step being performed by the elymoclavine oxidase cloA. Paspalic acid is then further converted to D-lysergic acid. Ergopeptines are assembled from D-lysergic acid and three different amino acids by the D-lysergyl-peptide-synthetases composed each of a monomudular and a trimodular nonribosomal peptide synthetase subunit. LpsB and lpsC encode the monomodular subunits responsible for D-lysergic acid activation and incorporation into the ergopeptine backbone. LpsA1 and A2 subunits encode the trimodular nonribosomal peptide synthetase assembling the tripeptide portion of ergopeptines. LpsA1 is responsible for formation of the major ergopeptine, ergotamine, and lpsA2 for alpha-ergocryptine, the minor ergopeptine of the total alkaloid mixture elaborated by C.purpurea. D-lysergyl-tripeptides are assembled by the nonribosomal peptide synthetases and released as N-(D-lysergyl-aminoacyl)-lactams. Cyclolization of the D-lysergyl-tripeptides is performed by the Fe(2+)/2-ketoglutarate-dependent dioxygenase easH which introduces a hydroxyl group into N-(D-lysergyl-aminoacyl)-lactam at alpha-C of the aminoacyl residue followed by spontaneous condensation with the terminal lactam carbonyl group. This chain is D-lysergyl-peptide-synthetase subunit 1, found in Claviceps purpurea (Ergot fungus).